The following is a 1171-amino-acid chain: DExH-box ATP-dependent RNA helicase DExH15 chloroplastic (1171 aa).

Residues 1–58 constitute a chloroplast transit peptide; that stretch reads MNTLPVVSLTASSSFKFFHFPSLHRSLSHSPNFSFTKSLILNPNHLSFKSTLNSLSPS. Polar residues predominate over residues 53 to 62; sequence NSLSPSQSQL. Residues 53-111 are disordered; the sequence is NSLSPSQSQLYEEEDDEEEEEEDEDDDDEAADEYDNISDEIRNSDDDDDDEETEFSVDL. 2 stretches are compositionally biased toward acidic residues: residues 63–90 and 97–107; these read YEEE…DNIS and DDDDDDEETEF. One can recognise a Helicase ATP-binding domain in the interval 163–327; the sequence is IEAFLRGSSV…WIGEIHGKTE (165 aa). 176–183 is a binding site for ATP; sequence APTSSGKT. A DEVH box motif is present at residues 275-278; sequence DEVH. One can recognise a Helicase C-terminal domain in the interval 424–620; that stretch reads QISDTLWHLQ…ASYGMVLNLV (197 aa).

This sequence belongs to the DExH box helicase family.

It localises to the plastid. Its subcellular location is the chloroplast. The protein resides in the cytoplasmic granule. The catalysed reaction is ATP + H2O = ADP + phosphate + H(+). Functionally, RNA helicase involved in group II intron splicing. Essential protein required during embryogenesis. Involved in post-transcriptional gene silencing. Modulates the determination of cell fate. Necessary for normal plasmodesmata (PD) development and aperture regulation. In Arabidopsis thaliana (Mouse-ear cress), this protein is DExH-box ATP-dependent RNA helicase DExH15 chloroplastic (ISE2).